The following is a 643-amino-acid chain: Macrolide export ATP-binding/permease protein MacB (643 aa).

The region spanning Ile6 to His244 is the ABC transporter domain. Gly42–Ser49 contributes to the ATP binding site. The next 4 helical transmembrane spans lie at Val270–Gly290, Leu518–Met538, Phe569–Leu589, and Leu606–Leu626.

It belongs to the ABC transporter superfamily. Macrolide exporter (TC 3.A.1.122) family. In terms of assembly, homodimer.

Its subcellular location is the cell inner membrane. Functionally, non-canonical ABC transporter that contains transmembrane domains (TMD), which form a pore in the inner membrane, and an ATP-binding domain (NBD), which is responsible for energy generation. Confers resistance against macrolides. In Wolinella succinogenes (strain ATCC 29543 / DSM 1740 / CCUG 13145 / JCM 31913 / LMG 7466 / NCTC 11488 / FDC 602W) (Vibrio succinogenes), this protein is Macrolide export ATP-binding/permease protein MacB.